The chain runs to 280 residues: Tumor necrosis factor ligand superfamily member 6 (280 aa).

The Cytoplasmic segment spans residues 1-80; that stretch reads MQQPFNYPYP…KKRGNHSTGL (80 aa). The interval 20 to 70 is disordered; sequence SSPWAPPGTVLPCPTSVPRRPGQRRPPPPPPPPPLPPPPPSPLPPLPLPPL. Positions 43–69 are enriched in pro residues; sequence RRPPPPPPPPPLPPPPPSPLPPLPLPP. Residues 81-101 form a helical; Signal-anchor for type II membrane protein membrane-spanning segment; the sequence is CLLVMFFMVLVALVGLGLGMF. Residues 102-280 are Extracellular-facing; that stretch reads QLFHLQKELA…SQTFFGLYKL (179 aa). The tract at residues 117–155 is disordered; that stretch reads TSQKHTASSLEKQIGHPSPPPEKKEQRKVAHLTGKPNSR. In terms of domain architecture, THD spans 144–280; the sequence is KVAHLTGKPN…SQTFFGLYKL (137 aa). N-linked (GlcNAc...) asparagine glycosylation is present at Asn-183. An intrachain disulfide couples Cys-201 to Cys-232. Asn-249 and Asn-259 each carry an N-linked (GlcNAc...) asparagine glycan.

Belongs to the tumor necrosis factor family. Homotrimer. Interacts with ARHGAP9, BAIAP2L1, BTK, CACNB3, CACNB4, CRK, DLG2, DNMBP, DOCK4, EPS8L3, FGR, FYB1, FYN, HCK, ITK, ITSN2, KALRN, LYN, MACC1, MIA, MPP4, MYO15A, NCF1, NCK1, NCK2, NCKIPSD, OSTF1, PIK3R1, PSTPIP1, RIMBP3C, SAMSN1, SH3GL3, SH3PXD2B, SH3PXD2A, SH3RF2, SKAP2, SNX33, SNX9, SORBS3, SPTA1, SRC, SRGAP1, SRGAP2, SRGAP3, TEC, TJP3 and YES1. The soluble form derives from the membrane form by proteolytic processing. The membrane-bound form undergoes two successive intramembrane proteolytic cleavages. The first one is processed by ADAM10 producing an N-terminal fragment, which lacks the receptor-binding extracellular domain. This ADAM10-processed FasL (FasL APL) remnant form is still membrane anchored and further processed by SPPL2A that liberates the FasL intracellular domain (FasL ICD). FasL shedding by ADAM10 is a prerequisite for subsequent intramembrane cleavage by SPPL2A in T-cells. Post-translationally, phosphorylated by FGR on tyrosine residues; this is required for ubiquitination and subsequent internalization. In terms of processing, N-glycosylated. Glycosylation enhances apoptotic activity. Monoubiquitinated.

The protein resides in the cell membrane. It localises to the cytoplasmic vesicle lumen. It is found in the lysosome lumen. The protein localises to the secreted. Its subcellular location is the nucleus. Its function is as follows. Cytokine that binds to TNFRSF6/FAS, a receptor that transduces the apoptotic signal into cells. Involved in cytotoxic T-cell-mediated apoptosis, natural killer cell-mediated apoptosis and in T-cell development. Initiates fratricidal/suicidal activation-induced cell death (AICD) in antigen-activated T-cells contributing to the termination of immune responses. TNFRSF6/FAS-mediated apoptosis has also a role in the induction of peripheral tolerance. Binds to TNFRSF6B/DcR3, a decoy receptor that blocks apoptosis. Functionally, induces FAS-mediated activation of NF-kappa-B, initiating non-apoptotic signaling pathways. Can induce apoptosis but does not appear to be essential for this process. In terms of biological role, cytoplasmic form induces gene transcription inhibition. This Macaca fascicularis (Crab-eating macaque) protein is Tumor necrosis factor ligand superfamily member 6 (FASLG).